Here is a 502-residue protein sequence, read N- to C-terminus: Tryptophan decarboxylase TDC1 (502 aa).

Over residues 1 to 18 (MGSLDSNYDTESPASVGQ) the composition is skewed to polar residues. Residues 1–21 (MGSLDSNYDTESPASVGQFNP) are disordered. Residue lysine 319 is modified to N6-(pyridoxal phosphate)lysine.

It belongs to the group II decarboxylase family. Requires pyridoxal 5'-phosphate as cofactor. In terms of tissue distribution, highly expressed in apex. Expressed in young stem and bark tissues. Expressed at low levels in leaves, fruits and seeds.

It carries out the reaction L-tryptophan + H(+) = tryptamine + CO2. In terms of biological role, involved in the biosynthesis of tryptamine. Supplies tryptamine for the indole moiety of camptothecin (CPT), an anti-cancer monoterpene alkaloid. Represents a key step in monoterpene indole alkaloid biosynthesis. Is specific for tryptophan, and inactive against tyrosine, phenylalanine and 3,4-dihydroxyphenylalanine (dopa). The protein is Tryptophan decarboxylase TDC1 of Camptotheca acuminata (Happy tree).